The chain runs to 272 residues: Type III pantothenate kinase (272 aa).

6–13 lines the ATP pocket; it reads DVRNTHTV. 109–112 serves as a coordination point for substrate; that stretch reads GADR. Aspartate 111 acts as the Proton acceptor in catalysis. Residue aspartate 131 participates in K(+) binding. Serine 134 is an ATP binding site. Threonine 186 provides a ligand contact to substrate.

It belongs to the type III pantothenate kinase family. In terms of assembly, homodimer. NH4(+) serves as cofactor. It depends on K(+) as a cofactor.

The protein localises to the cytoplasm. It carries out the reaction (R)-pantothenate + ATP = (R)-4'-phosphopantothenate + ADP + H(+). The protein operates within cofactor biosynthesis; coenzyme A biosynthesis; CoA from (R)-pantothenate: step 1/5. Its function is as follows. Catalyzes the phosphorylation of pantothenate (Pan), the first step in CoA biosynthesis. The protein is Type III pantothenate kinase of Mycobacterium bovis (strain BCG / Pasteur 1173P2).